A 399-amino-acid polypeptide reads, in one-letter code: MAMRPGPLWLLGLALCALGGGHGPRPPHTCPQRRLGARERRDMQREILAVLGLPGRPRPRAQPAAARQPASAPLFMLDLYHAMTDDDDGGPPQAHLGRADLVMSFVNMVERDRTLGYQEPHWKEFHFDLTQIPAGEAVTAAEFRIYKEPSTHPLNTTLHISMFEVVQEHSNRESDLFFLDLQTLRSGDEGWLVLDITAASDRWLLNHHKDLGLRLYVETADGHSMDPGLAGLLGRQAPRSRQPFMVTFFRASQSPVRAPRAARPLKRRQPKKTNELPHPNKLPGIFDDGHGSRGREVCRRHELYVSFRDLGWLDWVIAPQGYSAYYCEGECAFPLDSCMNATNHAILQSLVHLMKPDVVPKACCAPTKLSATSVLYYDSSNNVILRKHRNMVVKACGCH.

The N-terminal stretch at 1–19 (MAMRPGPLWLLGLALCALG) is a signal peptide. Positions 20–260 (GGHGPRPPHT…ASQSPVRAPR (241 aa)) are excised as a propeptide. N-linked (GlcNAc...) asparagine glycosylation occurs at Asn155. The segment at 257 to 286 (RAPRAARPLKRRQPKKTNELPHPNKLPGIF) is disordered. Intrachain disulfides connect Cys298/Cys364, Cys327/Cys396, and Cys331/Cys398. Asn340 carries an N-linked (GlcNAc...) asparagine glycan.

Belongs to the TGF-beta family. Homodimer; disulfide-linked. Expressed in testis. expressed in trophoblast cells of the labyrinthine region of the placenta and in the inner root sheath of hair follicles of early postnatal skin. Expressed predominantly in the neonatal mouse spermatogonia.

The protein resides in the secreted. In terms of biological role, growth factor of the TGF-beta superfamily that plays important role in various biological processes, including spermatogenesis, osteogenesis, steroidogenesis as well as regulation of energy balance. Initiates the canonical BMP signaling cascade by associating with type I receptor BMPR1A and type II receptor BMPR2. Once all three components are bound together in a complex at the cell surface, BMPR2 phosphorylates and activates BMPR1A. In turn, BMPR1A propagates signal by phosphorylating SMAD1/5/8 that travel to the nucleus and act as activators and repressors of transcription of target genes. In addition, activates the SMAD2/3 pathway. The protein is Bone morphogenetic protein 8A (Bmp8a) of Mus musculus (Mouse).